Consider the following 5596-residue polypeptide: Midasin (5596 aa).

Met1 carries the post-translational modification N-acetylmethionine. AAA-ATPase protomer regions lie at residues 307–591 (SVCK…TSKL), 659–978 (LIEQ…ASNP), 1048–1316 (KEPT…QEEI), and 1362–1616 (HIVW…NKMG). Residue 329–336 (GPIGCGKT) coordinates ATP. A disordered region spans residues 517–537 (SSVGCEQAPEEVSEARRENKR). ATP contacts are provided by residues 677 to 684 (GETGTGKT) and 1084 to 1091 (GETSVGKT). Thr1177 is modified (phosphothreonine). Residue 1390–1397 (GDTGCGKT) participates in ATP binding. Lys1683 carries the N6-acetyllysine modification. AAA-ATPase protomer stretches follow at residues 1738–1995 (RLLR…AVFK) and 2053–2313 (MKCV…IYIS). Residues 1753 to 1760 (GSPGVGKT) and 2066 to 2073 (GPASVGKT) each bind ATP. Phosphoserine is present on Ser1754. Residues 2418-4691 (SLRAHETWGD…EGEGMKDVSD (2274 aa)) are linker. Residues 3989 to 4008 (LVESDKEEQPDFLPRPTDGA) are disordered. Thr4212 is subject to Phosphothreonine. Ser4538 is modified (phosphoserine). 2 disordered regions span residues 4669–4688 (ATEF…GMKD) and 4700–5260 (EDTF…SRES). Residues 4702 to 4724 (TFQKGQEKDKEDPDSKSDIKGED) are compositionally biased toward basic and acidic residues. The span at 4741–4757 (ELEEQEEDDEKSDSEGG) shows a compositional bias: acidic residues. A phosphoserine mark is found at Ser4752 and Ser4754. A compositionally biased stretch (basic and acidic residues) spans 4758 to 4780 (DLDKHMGDLNGEEADKLDERLWG). Positions 4781–4794 (DDDEEEDEEEEDNK) are enriched in acidic residues. Over residues 4822 to 4834 (NKDKSQQDKKEEK) the composition is skewed to basic and acidic residues. Over residues 4835–4844 (EEAEADDGGQ) the composition is skewed to acidic residues. Residues 4845 to 4855 (GEDKINEQIDE) are compositionally biased toward basic and acidic residues. Acidic residues predominate over residues 4877 to 4888 (EALDLPDDLNLD). Ser4889 is subject to Phosphoserine. The span at 4896 to 4908 (EDTDNEEGEEENP) shows a compositional bias: acidic residues. Thr4898 is modified (phosphothreonine). The span at 4909–4928 (LEIKEKPEEAGHEAEERGET) shows a compositional bias: basic and acidic residues. 2 positions are modified to phosphoserine: Ser4937 and Ser4946. Residues 4940–4966 (EPEEGPSEDDKAEGEEEMDTGADDQDG) show a composition bias toward acidic residues. The segment covering 4968–4989 (AAQHPEEHSEEQQQSVEEKDKE) has biased composition (basic and acidic residues). The span at 5007–5021 (QEEEEREDSDTEEQV) shows a compositional bias: acidic residues. Ser5015 is subject to Phosphoserine. Polar residues predominate over residues 5033–5046 (CGQTGVENMQNTQA). The span at 5054–5064 (PEKEQGKEEHG) shows a compositional bias: basic and acidic residues. Basic residues predominate over residues 5088–5101 (KHTRKNTQSFKRKP). The span at 5105–5115 (DNERSMGDHNE) shows a compositional bias: basic and acidic residues. Positions 5132 to 5141 (QGPAQQPQAQ) are enriched in low complexity. Residues 5181 to 5197 (QEEEEIEDTLMDTEEQE) are compositionally biased toward acidic residues. Composition is skewed to basic and acidic residues over residues 5198–5213 (EFKA…EEIK) and 5233–5260 (KTEE…SRES). In terms of domain architecture, VWFA spans 5384 to 5583 (QICLAIDDSS…ALPETLSDAL (200 aa)).

This sequence belongs to the midasin family. Associates with pre-60S ribosomes in the nucleoplasm. Interacts (via its hexameric AAA ATPase ring) with the PELP1 complex (via PELP1); the interaction is regulated by SUMO conjugation of PELP1 and is crucial for recruitment of MDN1 to the pre-ribosomal particle. Interacts (via VWFA/MIDAS domain) with WDR12 (via UBL domain). Interacts (via VWFA/MIDAS domain) with NLE1 (via UBL domain).

It localises to the nucleus. The protein resides in the nucleolus. It is found in the nucleoplasm. Its subcellular location is the cytoplasm. Its function is as follows. Nuclear chaperone required for maturation and nuclear export of pre-60S ribosome subunits. Functions at successive maturation steps to remove ribosomal factors at critical transition points, first driving the exit of early pre-60S particles from the nucleolus and then driving late pre-60S particles from the nucleus. At an early stage in 60S maturation, mediates the dissociation of the PeBoW complex (PES1-BOP1-WDR12) from early pre-60S particles, rendering them competent for export from the nucleolus to the nucleoplasm. Subsequently recruited to the nucleoplasmic particles through interaction with SUMO-conjugated PELP1 complex. This binding is only possible if the 5S RNP at the central protuberance has undergone the rotation to complete its maturation. The polypeptide is Midasin (MDN1) (Homo sapiens (Human)).